A 588-amino-acid polypeptide reads, in one-letter code: MNKRTTYCGLVTEEFLNEKVTLKGWVHNRRDLGGLIFVDLRDREGIVQIVFNPDFSEEALQVAETVRSEYVVEVEGVVTKRDAETINPKIKTGQVEVQVSNIEIINKSETPPFSINEENVNVDENIRLKYRYLDLRRQELAQTFKMRHQTTRSIRQYLDNNGFFDIETPVLTKSTPEGARDYLVPSRVHEGEFYALPQSPQLFKQLLMISGFDKYYQIVKCFRDEDLRADRQPEFTQVDIEMSFVDQEDIIAMGEDMLRKVVKDVKGIDVSGPFPRMTYAEAMDRFGSDKPDTRFGMELINVSQLGKEMNFKVFKDTVDNNGEIKAIVAKDAANKYTRKDMDALTEFVNIYGAKGLAWVKVVDDGLSGPIARFFEDVNVETLKQLTEAKPGDLVMFVADKPNVVAQSLGALRIKLAKELGLIDESKLNFLWVTDWPLLEYDEDAKRYVAAHHPFTSPKREDIEKLDTEPENVQANAYDIVLNGYELGGGSIRIHDGELQQKMFEVLGFTNEQAQEQFGFLLDAFKYGAPPHGGIALGLDRLVMLLTNRTNLRDTIAFPKTASATCLLTDAPGEVSDKQLQELSLRIRH.

An L-aspartate-binding site is contributed by E177. The segment at 201–204 (QLFK) is aspartate. Residue R223 participates in L-aspartate binding. ATP contacts are provided by residues 223–225 (RDE) and Q232. H451 is a binding site for L-aspartate. E485 is an ATP binding site. Residue R492 participates in L-aspartate binding. 537-540 (GLDR) serves as a coordination point for ATP.

This sequence belongs to the class-II aminoacyl-tRNA synthetase family. Type 1 subfamily. As to quaternary structure, homodimer.

It localises to the cytoplasm. The catalysed reaction is tRNA(Asp) + L-aspartate + ATP = L-aspartyl-tRNA(Asp) + AMP + diphosphate. Its function is as follows. Catalyzes the attachment of L-aspartate to tRNA(Asp) in a two-step reaction: L-aspartate is first activated by ATP to form Asp-AMP and then transferred to the acceptor end of tRNA(Asp). The sequence is that of Aspartate--tRNA ligase from Staphylococcus epidermidis (strain ATCC 35984 / DSM 28319 / BCRC 17069 / CCUG 31568 / BM 3577 / RP62A).